The primary structure comprises 398 residues: Lymphocyte transmembrane adapter 1 (398 aa).

Over 1–37 (MDGVTPTLSTIRGRTLESSTLHVTPRSLDRNKDQITN) the chain is Extracellular. Residues 38-58 (IFSGFAGLLAILLVVAVFCIL) traverse the membrane as a helical; Signal-anchor for type III membrane protein segment. Over 59-398 (WNWNKRKKRQ…GPGTQLLPDE (340 aa)) the chain is Cytoplasmic. Phosphotyrosine is present on tyrosine 193. Residues 228 to 261 (TEERDEGCGDAGDCTSLYSPGAEDSDSLSNGEGS) are disordered. Residues tyrosine 268 and tyrosine 294 each carry the phosphotyrosine modification. Positions 298–330 (PAADPSGSQQQAEKDVPSSNIGHVEDKTDDPGT) are disordered. A compositionally biased stretch (polar residues) spans 303 to 318 (SGSQQQAEKDVPSSNI). Positions 320 to 329 (HVEDKTDDPG) are enriched in basic and acidic residues. Tyrosine 345 and tyrosine 373 each carry phosphotyrosine. The disordered stretch occupies residues 347–398 (DFQPFTQSEDSQMKHREEMSNEDSSDYENVLTAKLGGRDSEQGPGTQLLPDE).

In terms of assembly, when phosphorylated, interacts with GRB2, PIK3R1 and GRAP2. Phosphorylated on tyrosines by Syk, Lck or ZAP70 upon TCR or BCR activation; which leads to the recruitment of GRB2, PIK3R1 and GRAP2. As to expression, expressed in spleen, thymus, and peripheral blood leukocytes. Expressed in several B-, T-, NK and monocyte cell lines.

It localises to the cell membrane. Functionally, negatively regulates TCR (T-cell antigen receptor)-mediated signaling in T-cells and BCR (B-cell antigen receptor)-mediated signaling in B-cells. The polypeptide is Lymphocyte transmembrane adapter 1 (LAX1) (Homo sapiens (Human)).